The following is a 429-amino-acid chain: Xyloglucan O-acetyltransferase 1 (429 aa).

At 1–20 the chain is on the cytoplasmic side; it reads MGSPFKDHHHHHHPFSLAKK. The helical; Signal-anchor for type II membrane protein transmembrane segment at 21–41 threads the bilayer; the sequence is LIPWTFYAMIPLVLFRLYFYP. The Lumenal segment spans residues 42-429; the sequence is YPLHNITTPI…KWDYESRREE (388 aa). N-linked (GlcNAc...) asparagine glycosylation is found at asparagine 46 and asparagine 89. 4 disulfides stabilise this stretch: cysteine 72/cysteine 122, cysteine 93/cysteine 158, cysteine 102/cysteine 402, and cysteine 317/cysteine 398. The GDS motif signature appears at 145 to 147; it reads GDS. Serine 147 (nucleophile) is an active-site residue. N-linked (GlcNAc...) asparagine glycans are attached at residues asparagine 189, asparagine 263, and asparagine 351. Aspartate 397 (proton donor) is an active-site residue. The DXXH motif motif lies at 397–400; it reads DCVH. The active-site Proton acceptor is the histidine 400.

The protein belongs to the PC-esterase family. TBL subfamily.

It localises to the golgi apparatus membrane. Its function is as follows. Xyloglucan acetyltransferase that catalyzes the acetylation of fucosylated Gal residues on xyloglucan side chains. Predominantly catalyze 6-O-monoacetylation of Gal residues in the Fuc-Gal-Xyl trisaccharide side chains of xyloglucan oligomers. The protein is Xyloglucan O-acetyltransferase 1 of Populus trichocarpa (Western balsam poplar).